A 107-amino-acid chain; its full sequence is U1-lycotoxin-Ls1e (107 aa).

The first 20 residues, 1 to 20 (MMKVLVVFALLVTLISYSSS), serve as a signal peptide directing secretion. Positions 21–41 (EGIDDLEADELLSLMANEQTR) are excised as a propeptide. 4 disulfides stabilise this stretch: C44–C59, C51–C68, C58–C86, and C70–C84.

Belongs to the neurotoxin 19 (CSTX) family. 04 (U1-Lctx) subfamily. Expressed by the venom gland.

The protein localises to the secreted. The chain is U1-lycotoxin-Ls1e from Lycosa singoriensis (Wolf spider).